The chain runs to 439 residues: 3beta-hydroxysteroid-dehydrogenase/decarboxylase isoform 1 (439 aa).

16–21 is an NAD(+) binding site; the sequence is GGRGFA. Asn75 and Asn158 each carry an N-linked (GlcNAc...) asparagine glycan. NAD(+) contacts are provided by Tyr161 and Lys165. Residue Lys165 is the Proton donor of the active site. Asn327 carries N-linked (GlcNAc...) asparagine glycosylation. Residues 371-439 form the Reticulon; atypical domain; that stretch reads VTETIQWKKQ…MKVFGSKKID (69 aa). The next 2 membrane-spanning stretches (helical) occupy residues 381–401 and 405–425; these read TLIA…TTGS and IITA…INGI.

This sequence belongs to the 3-beta-HSD family.

The protein localises to the endoplasmic reticulum membrane. It carries out the reaction a 3beta-hydroxysteroid-4alpha-carboxylate + NAD(+) = a 3-oxosteroid + CO2 + NADH. The enzyme catalyses 4alpha-carboxy-4beta,14alpha-dimethyl-9beta,19-cyclo-5alpha-ergost-24(24(1))-en-3beta-ol + NAD(+) = cycloeucalenone + CO2 + NADH. It participates in steroid biosynthesis; zymosterol biosynthesis; zymosterol from lanosterol: step 4/6. Functionally, 3beta-hydroxysteroid-dehydrogenase/decarboxylase involved in sterol synthesis. Catalyzes the formation of 3-oxosteroids from 3beta-hydroxysteroids-4alpha-carboxylate. Involved in the regulation of inflorescence internodes and leaves growth, probably by affecting auxin transporter activity possibly by altering sterol composition in the membranes. The polypeptide is 3beta-hydroxysteroid-dehydrogenase/decarboxylase isoform 1 (Arabidopsis thaliana (Mouse-ear cress)).